The chain runs to 495 residues: Glycerol kinase (495 aa).

Thr11 provides a ligand contact to ADP. ATP-binding residues include Thr11, Thr12, and Ser13. Thr11 is a sn-glycerol 3-phosphate binding site. Arg15 is a binding site for ADP. Residues Arg81, Glu82, Tyr133, and Asp242 each contribute to the sn-glycerol 3-phosphate site. Arg81, Glu82, Tyr133, Asp242, and Gln243 together coordinate glycerol. Thr264 and Gly307 together coordinate ADP. The ATP site is built by Thr264, Gly307, Gln311, and Gly408. 2 residues coordinate ADP: Gly408 and Asn412.

Belongs to the FGGY kinase family.

The enzyme catalyses glycerol + ATP = sn-glycerol 3-phosphate + ADP + H(+). It functions in the pathway polyol metabolism; glycerol degradation via glycerol kinase pathway; sn-glycerol 3-phosphate from glycerol: step 1/1. Its activity is regulated as follows. Inhibited by fructose 1,6-bisphosphate (FBP). Its function is as follows. Key enzyme in the regulation of glycerol uptake and metabolism. Catalyzes the phosphorylation of glycerol to yield sn-glycerol 3-phosphate. This chain is Glycerol kinase, found in Citrifermentans bemidjiense (strain ATCC BAA-1014 / DSM 16622 / JCM 12645 / Bem) (Geobacter bemidjiensis).